The following is a 577-amino-acid chain: Arginine--tRNA ligase (577 aa).

A 'HIGH' region motif is present at residues 122 to 132 (PNVAKEMHVGH).

It belongs to the class-I aminoacyl-tRNA synthetase family. Monomer.

It localises to the cytoplasm. It carries out the reaction tRNA(Arg) + L-arginine + ATP = L-arginyl-tRNA(Arg) + AMP + diphosphate. This is Arginine--tRNA ligase from Salmonella paratyphi B (strain ATCC BAA-1250 / SPB7).